Consider the following 422-residue polypeptide: Acylglycerol kinase, mitochondrial (422 aa).

An N6-acetyllysine modification is found at Lys6. Residues 15 to 31 (TTAGLCLLTWGGHWLYG) are hydrophobic. In terms of domain architecture, DAGKc spans 58–199 (AQVKKATVFL…LDVLQIKGEK (142 aa)). The interval 249 to 271 (QASISYTGPTERPPSEPEETPVQ) is disordered.

The protein belongs to the AGK family. Component of the TIM22 complex, which core is composed of TIMM22, associated with TIMM10 (TIMM10A and/or TIMM10B), TIMM9, AGK and TIMM29. Interacts with SMIM26. Requires Mg(2+) as cofactor.

Its subcellular location is the mitochondrion inner membrane. It is found in the mitochondrion intermembrane space. It carries out the reaction a monoacylglycerol + ATP = a monoacyl-sn-glycero-3-phosphate + ADP + H(+). The enzyme catalyses a 1,2-diacyl-sn-glycerol + ATP = a 1,2-diacyl-sn-glycero-3-phosphate + ADP + H(+). It catalyses the reaction an N-acylsphing-4-enine + ATP = an N-acylsphing-4-enine 1-phosphate + ADP + H(+). The catalysed reaction is 1-(9Z-octadecenoyl)-sn-glycerol + ATP = 1-(9Z-octadecenoyl)-sn-glycero-3-phosphate + ADP + H(+). It carries out the reaction 1,2-di-(9Z-octadecenoyl)-sn-glycerol + ATP = 1,2-di-(9Z-octadecenoyl)-sn-glycero-3-phosphate + ADP + H(+). The enzyme catalyses a 1-acyl-sn-glycerol + ATP = a 1-acyl-sn-glycero-3-phosphate + ADP + H(+). It catalyses the reaction 1-hexadecanoyl-sn-glycerol + ATP = 1-hexadecanoyl-sn-glycero-3-phosphate + ADP + H(+). The catalysed reaction is a 2-acylglycerol + ATP = a 2-acyl-sn-glycerol 3-phosphate + ADP + H(+). It carries out the reaction 2-(5Z,8Z,11Z,14Z-eicosatetraenoyl)-glycerol + ATP = 2-(5Z,8Z,11Z,14Z-eicosatetraenoyl)-sn-glycero-3-phosphate + ADP + H(+). The enzyme catalyses 1-(5Z,8Z,11Z,14Z-eicosatetraenoyl)-sn-glycerol + ATP = 1-(5Z,8Z,11Z,14Z-eicosatetraenoyl)-sn-glycero-3-phosphate + ADP + H(+). It catalyses the reaction N-(hexanoyl)sphing-4-enine + ATP = N-hexanoylsphing-4-enine 1-phosphate + ADP + H(+). It functions in the pathway lipid metabolism; glycerolipid metabolism. Functionally, lipid kinase that can phosphorylate both monoacylglycerol and diacylglycerol to form lysophosphatidic acid (LPA) and phosphatidic acid (PA), respectively. Phosphorylates ceramide but not sphingosine. Phosphorylates 1,2-dioleoylglycerol more rapidly than 2,3-dioleoylglycerol. Independently of its lipid kinase activity, acts as a component of the TIM22 complex. The TIM22 complex mediates the import and insertion of multi-pass transmembrane proteins into the mitochondrial inner membrane by forming a twin-pore translocase that uses the membrane potential as the external driving force. In the TIM22 complex, required for the import of a subset of metabolite carriers into mitochondria, such as ANT1/SLC25A4 and SLC25A24, while it is not required for the import of TIMM23. Overexpression increases the formation and secretion of LPA, resulting in transactivation of EGFR and activation of the downstream MAPK signaling pathway, leading to increased cell growth. In Pongo abelii (Sumatran orangutan), this protein is Acylglycerol kinase, mitochondrial.